A 525-amino-acid polypeptide reads, in one-letter code: GMP synthase [glutamine-hydrolyzing] (525 aa).

The 199-residue stretch at 9 to 207 folds into the Glutamine amidotransferase type-1 domain; it reads RILILDFGSQ…VRDICQCEAL (199 aa). C86 serves as the catalytic Nucleophile. Residues H181 and E183 contribute to the active site. One can recognise a GMPS ATP-PPase domain in the interval 208–400; it reads WTPAKIIDDA…LGLPYNMLYR (193 aa). 235–241 serves as a coordination point for ATP; it reads SGGVDSS.

As to quaternary structure, homodimer.

The enzyme catalyses XMP + L-glutamine + ATP + H2O = GMP + L-glutamate + AMP + diphosphate + 2 H(+). Its pathway is purine metabolism; GMP biosynthesis; GMP from XMP (L-Gln route): step 1/1. In terms of biological role, catalyzes the synthesis of GMP from XMP. In Pectobacterium carotovorum subsp. carotovorum (strain PC1), this protein is GMP synthase [glutamine-hydrolyzing].